The following is a 129-amino-acid chain: Small ribosomal subunit protein uS11 (129 aa).

This sequence belongs to the universal ribosomal protein uS11 family. Part of the 30S ribosomal subunit. Interacts with proteins S7 and S18. Binds to IF-3.

Located on the platform of the 30S subunit, it bridges several disparate RNA helices of the 16S rRNA. Forms part of the Shine-Dalgarno cleft in the 70S ribosome. This is Small ribosomal subunit protein uS11 from Methylorubrum populi (strain ATCC BAA-705 / NCIMB 13946 / BJ001) (Methylobacterium populi).